Reading from the N-terminus, the 117-residue chain is Large ribosomal subunit protein uL18 (117 aa).

It belongs to the universal ribosomal protein uL18 family. As to quaternary structure, part of the 50S ribosomal subunit; part of the 5S rRNA/L5/L18/L25 subcomplex. Contacts the 5S and 23S rRNAs.

Functionally, this is one of the proteins that bind and probably mediate the attachment of the 5S RNA into the large ribosomal subunit, where it forms part of the central protuberance. The polypeptide is Large ribosomal subunit protein uL18 (Yersinia enterocolitica serotype O:8 / biotype 1B (strain NCTC 13174 / 8081)).